Consider the following 700-residue polypeptide: Transketolase (700 aa).

N-acetylthreonine is present on Thr2. His45 is a substrate binding site. Residues Thr48, His85, 133–135 (GPL), and Leu135 each bind thiamine diphosphate. A Mg(2+)-binding site is contributed by Asp177. 2 residues coordinate thiamine diphosphate: Gly178 and Asn207. Residues Asn207 and Ile209 each contribute to the Mg(2+) site. Substrate-binding residues include His283, Arg378, and Ser405. His283 provides a ligand contact to thiamine diphosphate. The Proton donor role is filled by Glu441. Thiamine diphosphate is bound at residue Phe467. Substrate-binding residues include His491, Asp499, and Arg552.

Belongs to the transketolase family. Homodimer. It depends on Mg(2+) as a cofactor. Ca(2+) serves as cofactor. Requires Mn(2+) as cofactor. The cofactor is Co(2+). Thiamine diphosphate is required as a cofactor.

The catalysed reaction is D-sedoheptulose 7-phosphate + D-glyceraldehyde 3-phosphate = aldehydo-D-ribose 5-phosphate + D-xylulose 5-phosphate. Functionally, catalyzes the reversible transfer of a two-carbon ketol group from sedoheptulose-7-phosphate to glyceraldehyde-3-phosphate, producing xylulose-5-phosphate and ribose-5-phosphate. Catalyzes the transfer of a two-carbon ketol group from a ketose donor to an aldose acceptor, via a covalent intermediate with the cofactor thiamine pyrophosphate. The protein is Transketolase (tkt) of Mycobacterium tuberculosis (strain ATCC 25618 / H37Rv).